The chain runs to 434 residues: uncharacterized protein (434 aa).

11 helical membrane passes run 50–70 (GSIA…SFTL), 72–92 (TGLL…VLAI), 95–115 (LMAF…LLPV), 135–155 (SPVV…QFGW), 158–178 (SLIA…YFPH), 179–199 (LNPE…IAIT), 229–249 (LPYI…KIFA), 288–308 (GFVP…VAGF), 319–339 (PNPM…VLLL), 376–396 (IFAA…AIYF), and 412–432 (VVAV…GLFV).

The protein localises to the cell membrane. This is an uncharacterized protein from Escherichia coli (strain K12).